A 501-amino-acid chain; its full sequence is Aminoaldehyde dehydrogenase ALDH10A8, chloroplastic (501 aa).

Na(+) is bound by residues D99 and L189. NAD(+) contacts are provided by residues 238–243 and 238–245; these read GSFATG and GSFATGSK. Catalysis depends on E260, which acts as the Proton acceptor. Positions 294 and 393 each coordinate NAD(+). Residue C294 is the Nucleophile of the active site.

This sequence belongs to the aldehyde dehydrogenase family. Homodimer. Widely expressed.

The protein localises to the cytoplasm. It localises to the plastid. It is found in the chloroplast. It carries out the reaction 4-aminobutanal + NAD(+) + H2O = 4-aminobutanoate + NADH + 2 H(+). The enzyme catalyses 3-aminopropanal + NAD(+) + H2O = beta-alanine + NADH + 2 H(+). It catalyses the reaction 4-(trimethylamino)butanal + NAD(+) + H2O = 4-(trimethylamino)butanoate + NADH + 2 H(+). The catalysed reaction is 4-guanidinobutanal + NAD(+) + H2O = 4-guanidinobutanoate + NADH + 2 H(+). It carries out the reaction betaine aldehyde + NAD(+) + H2O = glycine betaine + NADH + 2 H(+). The protein operates within amine and polyamine biosynthesis; betaine biosynthesis via choline pathway; betaine from betaine aldehyde: step 1/1. Its function is as follows. Dehydrogenase that catalyzes the oxidation of several aminoaldehydes. Metabolizes and detoxifies aldehyde products of polyamine degradation to non-toxic amino acids. Catalyzes the oxidation of 4-aminobutanal and 3-aminopropanal to 4-aminobutanoate and beta-alanine, respectively. Production of 4-aminobutinoate by ALDH10A8 may confer tolerance to salt stress. Catalyzes the oxidation of 4-(trimethylamino)butanal and 4-guanidinobutanal to 4-trimethylammoniobutanoate and 4-guanidinobutanoate, respectively. Involved in glycine betaine biosynthesis. Catalyzes with low efficiency the oxidation of betaine aldehyde to glycine betaine. The protein is Aminoaldehyde dehydrogenase ALDH10A8, chloroplastic of Arabidopsis thaliana (Mouse-ear cress).